A 527-amino-acid polypeptide reads, in one-letter code: Probable protein kinase UbiB (527 aa).

The Protein kinase domain occupies 123–527; it reads EFNETALASA…AIWLLIYLLS (405 aa). ATP-binding positions include 129-137 and Lys161; that span reads LASASIAQV. Asp296 functions as the Proton acceptor in the catalytic mechanism. A helical membrane pass occupies residues 506–526; the sequence is FTSFILGLCTGLAIWLLIYLL.

It belongs to the ABC1 family. UbiB subfamily.

It is found in the cell inner membrane. It participates in cofactor biosynthesis; ubiquinone biosynthesis [regulation]. Its function is as follows. Is probably a protein kinase regulator of UbiI activity which is involved in aerobic coenzyme Q (ubiquinone) biosynthesis. The polypeptide is Probable protein kinase UbiB (Pasteurella multocida (strain Pm70)).